A 446-amino-acid polypeptide reads, in one-letter code: Maltoporin (446 aa).

A signal peptide spans 1–25 (MMITLRKLPLAVAVAAGVMSAQAMA).

Belongs to the porin LamB (TC 1.B.3) family. In terms of assembly, homotrimer formed of three 18-stranded antiparallel beta-barrels, containing three independent channels.

It localises to the cell outer membrane. The enzyme catalyses beta-maltose(in) = beta-maltose(out). Functionally, involved in the transport of maltose and maltodextrins. The sequence is that of Maltoporin from Escherichia coli O7:K1 (strain IAI39 / ExPEC).